Here is a 502-residue protein sequence, read N- to C-terminus: NADH-quinone oxidoreductase subunit N (502 aa).

A run of 14 helical transmembrane segments spans residues 16 to 36 (TLVP…IDLF), 47 to 67 (MLSL…AGVF), 85 to 105 (LAIL…PLAL), 113 to 133 (FSYP…QFMV), 138 to 158 (LILI…LIAM), 172 to 192 (FTMG…FYAL), 213 to 233 (IGFV…KLSM), 248 to 268 (SAAL…IVAM), 273 to 293 (FLIH…VVVT), 310 to 330 (MLAY…LIGT), 337 to 357 (LFLY…MLWI), 387 to 407 (ASIM…ALFW), 410 to 430 (MYLM…IMAL), and 470 to 490 (TIIG…NQLI).

The protein belongs to the complex I subunit 2 family. As to quaternary structure, NDH-1 is composed of 14 different subunits. Subunits NuoA, H, J, K, L, M, N constitute the membrane sector of the complex.

The protein localises to the cell inner membrane. It catalyses the reaction a quinone + NADH + 5 H(+)(in) = a quinol + NAD(+) + 4 H(+)(out). In terms of biological role, NDH-1 shuttles electrons from NADH, via FMN and iron-sulfur (Fe-S) centers, to quinones in the respiratory chain. The immediate electron acceptor for the enzyme in this species is believed to be ubiquinone. Couples the redox reaction to proton translocation (for every two electrons transferred, four hydrogen ions are translocated across the cytoplasmic membrane), and thus conserves the redox energy in a proton gradient. This chain is NADH-quinone oxidoreductase subunit N, found in Sulfurimonas denitrificans (strain ATCC 33889 / DSM 1251) (Thiomicrospira denitrificans (strain ATCC 33889 / DSM 1251)).